The primary structure comprises 541 residues: Cytochrome P450 monooxygenase claU (541 aa).

A helical membrane pass occupies residues 12–32 (VIDTLVILFSTWAFLGLIRVI). Cysteine 480 is a binding site for heme.

This sequence belongs to the cytochrome P450 family. Requires heme as cofactor.

It localises to the membrane. It participates in secondary metabolite biosynthesis; terpenoid biosynthesis. Functionally, cytochrome P450 monooxygenase; part of the gene cluster that mediates the biosynthesis of clavilactone A, a meroterpenoid that features a unique benzo-fused ten-membered carbocyclic ring unit with an alpha,beta-epoxy-gamma-lactone moiety, forming an intriguing 10/5/3 tricyclic nested skeleton. Cytochrome P450 monooxygenases claO, claP, claQ, claU, and claW are close orthologs, suggesting that a redundant function or pseudogenes are present in the cla cluster. These monoxygenases are not involved in clavilactone A biosynthesis nor its modification. ClaR, ClaS and ClaT are sufficient to produce clavilactone A. The biosynthesis begins with the prenyltransferase claS that transfers geranyl pyrophosphate (GPP) to hydroquinone to produces geranylhydroquinone. The cytochrome P450 monooxygenase claR then catalyzes the diradical coupling reaction between the intramolecular hydroquinone and allyl moieties to form the benzo-fused ten-membered carbocyclic ring unit of wigantol. Finally the cytochrome P450 monooxygenase claT exquisitely and stereoselectively assembles the alpha,beta-epoxy-gamma-lactone moiety, producing clavilactone A via arnebinol A. The sequence is that of Cytochrome P450 monooxygenase claU from Ampulloclitocybe clavipes (Club foot).